Reading from the N-terminus, the 208-residue chain is Small ribosomal subunit protein eS8 (208 aa).

The segment at 1-34 (MGISRDHWHKRRATGGKRAPIRKKRKYELGRPAA) is disordered. Residues 7 to 26 (HWHKRRATGGKRAPIRKKRK) are compositionally biased toward basic residues.

This sequence belongs to the eukaryotic ribosomal protein eS8 family. Component of the small ribosomal subunit. Identified in a IGF2BP1-dependent mRNP granule complex containing untranslated mRNAs. Part of the small subunit (SSU) processome, composed of more than 70 proteins and the RNA chaperone small nucleolar RNA (snoRNA) U3.

The protein localises to the cytoplasm. It is found in the membrane. The protein resides in the nucleus. Its subcellular location is the nucleolus. Its function is as follows. Component of the small ribosomal subunit. The ribosome is a large ribonucleoprotein complex responsible for the synthesis of proteins in the cell. Part of the small subunit (SSU) processome, first precursor of the small eukaryotic ribosomal subunit. During the assembly of the SSU processome in the nucleolus, many ribosome biogenesis factors, an RNA chaperone and ribosomal proteins associate with the nascent pre-rRNA and work in concert to generate RNA folding, modifications, rearrangements and cleavage as well as targeted degradation of pre-ribosomal RNA by the RNA exosome. The chain is Small ribosomal subunit protein eS8 (RpS8) from Spodoptera frugiperda (Fall armyworm).